A 239-amino-acid chain; its full sequence is Putative CCR4-associated factor 1 homolog 8 (239 aa).

Residues aspartate 17, glutamate 19, aspartate 133, and asparagine 204 each coordinate a divalent metal cation.

This sequence belongs to the CAF1 family. In terms of assembly, component of the CCR4-NOT complex, at least composed of CRR4 and CAF1 proteins. Requires a divalent metal cation as cofactor.

The protein localises to the nucleus. It localises to the cytoplasm. It carries out the reaction Exonucleolytic cleavage of poly(A) to 5'-AMP.. Ubiquitous transcription factor required for a diverse set of processes. It is a component of the CCR4 complex involved in the control of gene expression. The chain is Putative CCR4-associated factor 1 homolog 8 (CAF1-8) from Arabidopsis thaliana (Mouse-ear cress).